We begin with the raw amino-acid sequence, 417 residues long: Probable dihydrofolate synthetase (417 aa).

Position 34–37 (34–37 (GKGS)) interacts with ATP. Residues serine 58, glutamate 123, and histidine 151 each coordinate Mg(2+). Residues arginine 274 and aspartate 289 each contribute to the ATP site.

Belongs to the folylpolyglutamate synthase family.

It carries out the reaction 7,8-dihydropteroate + L-glutamate + ATP = 7,8-dihydrofolate + ADP + phosphate + H(+). The protein operates within cofactor biosynthesis; tetrahydrofolylpolyglutamate biosynthesis. In terms of biological role, glutamate-adding enzyme which catalyzes the binding of the first glutamyl side chain to dihydropteroate. Leads to the de nove synthesis of tetrahydrofolate. de novo. In Schizosaccharomyces pombe (strain 972 / ATCC 24843) (Fission yeast), this protein is Probable dihydrofolate synthetase (fol3).